The sequence spans 551 residues: Dihydroxy-acid dehydratase (551 aa).

Mg(2+) is bound at residue aspartate 78. Residue cysteine 119 coordinates [2Fe-2S] cluster. The Mg(2+) site is built by aspartate 120 and lysine 121. Lysine 121 is modified (N6-carboxylysine). Cysteine 191 contributes to the [2Fe-2S] cluster binding site. Glutamate 442 lines the Mg(2+) pocket. Serine 468 serves as the catalytic Proton acceptor.

It belongs to the IlvD/Edd family. Homodimer. [2Fe-2S] cluster is required as a cofactor. The cofactor is Mg(2+).

It catalyses the reaction (2R)-2,3-dihydroxy-3-methylbutanoate = 3-methyl-2-oxobutanoate + H2O. It carries out the reaction (2R,3R)-2,3-dihydroxy-3-methylpentanoate = (S)-3-methyl-2-oxopentanoate + H2O. It participates in amino-acid biosynthesis; L-isoleucine biosynthesis; L-isoleucine from 2-oxobutanoate: step 3/4. The protein operates within amino-acid biosynthesis; L-valine biosynthesis; L-valine from pyruvate: step 3/4. Its function is as follows. Functions in the biosynthesis of branched-chain amino acids. Catalyzes the dehydration of (2R,3R)-2,3-dihydroxy-3-methylpentanoate (2,3-dihydroxy-3-methylvalerate) into 2-oxo-3-methylpentanoate (2-oxo-3-methylvalerate) and of (2R)-2,3-dihydroxy-3-methylbutanoate (2,3-dihydroxyisovalerate) into 2-oxo-3-methylbutanoate (2-oxoisovalerate), the penultimate precursor to L-isoleucine and L-valine, respectively. The sequence is that of Dihydroxy-acid dehydratase from Halothermothrix orenii (strain H 168 / OCM 544 / DSM 9562).